The chain runs to 506 residues: Zinc finger and SCAN domain containing protein 4F (506 aa).

The segment at 1–24 (MASQQAPAKDLQTNNLEFTPTDSS) is disordered. Residues 37–119 (SAQLNFSPSN…RFMESLTDEC (83 aa)) enclose the SCAN box domain. 4 C2H2-type zinc fingers span residues 395-417 (YKCEECSRMFKHARSLSSHQRTH), 424-446 (LLCVTCQKMFKRVSDRRTHEIIH), 452-474 (FKCSTCEKSFSHKTNLKSHEMIH), and 480-503 (YVCSLCSRRFRQSSTYHRHLRNYH).

Up-regulated in blastocyst outgrowths and is detectable in a mosaic fashion in ES cultures.

Its subcellular location is the nucleus. It is found in the chromosome. The protein localises to the telomere. Its function is as follows. Transcription factor required to regulate early development. Binds telomeres and plays a key role in genomic stability by regulating telomere elongation. Acts as an activator of spontaneous telomere sister chromatid exchange (T-SCE) and telomere elongation. The protein is Zinc finger and SCAN domain containing protein 4F (Zscan4f) of Mus musculus (Mouse).